A 534-amino-acid chain; its full sequence is NAD(P)H-quinone oxidoreductase chain 4 2 (534 aa).

The next 14 helical transmembrane spans lie at 9 to 29 (FPWL…IPLI), 51 to 71 (WFAL…FYVG), 106 to 126 (LILL…PVTL), 130 to 150 (LFYF…AVQD), 152 to 172 (LLFF…LSIW), 184 to 204 (FILY…AMAF), 227 to 247 (LLMY…FPLH), 258 to 278 (TAPV…YALM), 290 to 310 (LYFA…AALT), 326 to 346 (ISHM…GMSG), 347 to 367 (AMLQ…LVGA), 399 to 419 (LASL…VFIG), 432 to 452 (LVVV…LLSM), and 479 to 499 (VFII…PKLV).

This sequence belongs to the complex I subunit 4 family.

The protein localises to the cellular thylakoid membrane. The enzyme catalyses a plastoquinone + NADH + (n+1) H(+)(in) = a plastoquinol + NAD(+) + n H(+)(out). It catalyses the reaction a plastoquinone + NADPH + (n+1) H(+)(in) = a plastoquinol + NADP(+) + n H(+)(out). NDH-1 shuttles electrons from NAD(P)H, via FMN and iron-sulfur (Fe-S) centers, to quinones in the respiratory chain. The immediate electron acceptor for the enzyme in this species is believed to be plastoquinone. Couples the redox reaction to proton translocation (for every two electrons transferred, four hydrogen ions are translocated across the cytoplasmic membrane), and thus conserves the redox energy in a proton gradient. The protein is NAD(P)H-quinone oxidoreductase chain 4 2 of Synechococcus sp. (strain JA-2-3B'a(2-13)) (Cyanobacteria bacterium Yellowstone B-Prime).